Consider the following 297-residue polypeptide: Large ribosomal subunit protein uL18 (297 aa).

The protein belongs to the universal ribosomal protein uL18 family. Component of the large ribosomal subunit (LSU).

Its subcellular location is the cytoplasm. The protein resides in the nucleus. Functionally, component of the ribosome, a large ribonucleoprotein complex responsible for the synthesis of proteins in the cell. The small ribosomal subunit (SSU) binds messenger RNAs (mRNAs) and translates the encoded message by selecting cognate aminoacyl-transfer RNA (tRNA) molecules. The large subunit (LSU) contains the ribosomal catalytic site termed the peptidyl transferase center (PTC), which catalyzes the formation of peptide bonds, thereby polymerizing the amino acids delivered by tRNAs into a polypeptide chain. The nascent polypeptides leave the ribosome through a tunnel in the LSU and interact with protein factors that function in enzymatic processing, targeting, and the membrane insertion of nascent chains at the exit of the ribosomal tunnel. The polypeptide is Large ribosomal subunit protein uL18 (RpL5) (Aedes aegypti (Yellowfever mosquito)).